The following is a 95-amino-acid chain: Acyl carrier protein AcpXL (95 aa).

The 87-residue stretch at 4-90 folds into the Carrier domain; the sequence is TATFDKVADI…NLCAKIDELR (87 aa). Residue serine 39 is modified to O-(pantetheine 4'-phosphoryl)serine.

In terms of processing, 4'-phosphopantetheine is transferred from CoA to a specific serine of apo-ACP by AcpS. This modification is essential for activity because fatty acids are bound in thioester linkage to the sulfhydryl of the prosthetic group.

Its subcellular location is the cytoplasm. It functions in the pathway glycolipid biosynthesis; KDO(2)-lipid A biosynthesis. Functionally, carrier of the growing fatty acid chain in fatty acid biosynthesis. Is involved in the transfer of long hydroxylated fatty acids to lipid A. The polypeptide is Acyl carrier protein AcpXL (acpXL) (Rhizobium meliloti (strain 1021) (Ensifer meliloti)).